Here is a 289-residue protein sequence, read N- to C-terminus: Phosphatidylserine decarboxylase proenzyme (289 aa).

Catalysis depends on charge relay system; for autoendoproteolytic cleavage activity residues Asp-92, His-149, and Ser-254. Ser-254 functions as the Schiff-base intermediate with substrate; via pyruvic acid; for decarboxylase activity in the catalytic mechanism. Position 254 is a pyruvic acid (Ser); by autocatalysis (Ser-254).

Belongs to the phosphatidylserine decarboxylase family. PSD-B subfamily. Prokaryotic type I sub-subfamily. Heterodimer of a large membrane-associated beta subunit and a small pyruvoyl-containing alpha subunit. Pyruvate is required as a cofactor. Is synthesized initially as an inactive proenzyme. Formation of the active enzyme involves a self-maturation process in which the active site pyruvoyl group is generated from an internal serine residue via an autocatalytic post-translational modification. Two non-identical subunits are generated from the proenzyme in this reaction, and the pyruvate is formed at the N-terminus of the alpha chain, which is derived from the carboxyl end of the proenzyme. The autoendoproteolytic cleavage occurs by a canonical serine protease mechanism, in which the side chain hydroxyl group of the serine supplies its oxygen atom to form the C-terminus of the beta chain, while the remainder of the serine residue undergoes an oxidative deamination to produce ammonia and the pyruvoyl prosthetic group on the alpha chain. During this reaction, the Ser that is part of the protease active site of the proenzyme becomes the pyruvoyl prosthetic group, which constitutes an essential element of the active site of the mature decarboxylase.

Its subcellular location is the cell membrane. It carries out the reaction a 1,2-diacyl-sn-glycero-3-phospho-L-serine + H(+) = a 1,2-diacyl-sn-glycero-3-phosphoethanolamine + CO2. It participates in phospholipid metabolism; phosphatidylethanolamine biosynthesis; phosphatidylethanolamine from CDP-diacylglycerol: step 2/2. Its function is as follows. Catalyzes the formation of phosphatidylethanolamine (PtdEtn) from phosphatidylserine (PtdSer). The protein is Phosphatidylserine decarboxylase proenzyme of Pseudomonas aeruginosa (strain ATCC 15692 / DSM 22644 / CIP 104116 / JCM 14847 / LMG 12228 / 1C / PRS 101 / PAO1).